A 279-amino-acid polypeptide reads, in one-letter code: Oxygen-dependent coproporphyrinogen-III oxidase (279 aa).

Serine 102 is a binding site for substrate. A divalent metal cation is bound by residues histidine 106 and histidine 116. Histidine 116 serves as the catalytic Proton donor. Position 118 to 120 (118 to 120) interacts with substrate; the sequence is NTR. 2 residues coordinate a divalent metal cation: histidine 149 and histidine 179. Residues 244–279 are important for dimerization; it reads YVEFNLLYDRGTKFGLMTDGNVEAILMSLPPEVKFN.

It belongs to the aerobic coproporphyrinogen-III oxidase family. As to quaternary structure, homodimer. Requires a divalent metal cation as cofactor.

It is found in the cytoplasm. It catalyses the reaction coproporphyrinogen III + O2 + 2 H(+) = protoporphyrinogen IX + 2 CO2 + 2 H2O. Its pathway is porphyrin-containing compound metabolism; protoporphyrin-IX biosynthesis; protoporphyrinogen-IX from coproporphyrinogen-III (O2 route): step 1/1. Functionally, involved in the heme biosynthesis. Catalyzes the aerobic oxidative decarboxylation of propionate groups of rings A and B of coproporphyrinogen-III to yield the vinyl groups in protoporphyrinogen-IX. The polypeptide is Oxygen-dependent coproporphyrinogen-III oxidase (Rickettsia felis (strain ATCC VR-1525 / URRWXCal2) (Rickettsia azadi)).